Consider the following 461-residue polypeptide: NADP-specific glutamate dehydrogenase (461 aa).

Lys-115 is an active-site residue.

The protein belongs to the Glu/Leu/Phe/Val dehydrogenases family. Homohexamer.

The catalysed reaction is L-glutamate + NADP(+) + H2O = 2-oxoglutarate + NH4(+) + NADPH + H(+). This chain is NADP-specific glutamate dehydrogenase (GDH), found in Penicillium chrysogenum (Penicillium notatum).